Here is a 585-residue protein sequence, read N- to C-terminus: uncharacterized protein (585 aa).

Positions 1–18 (MSALSTKLEPTNSYSESL) are enriched in polar residues. The disordered stretch occupies residues 1–23 (MSALSTKLEPTNSYSESLPPQRR).

The protein belongs to the protein kinase superfamily. ADCK protein kinase family.

This is an uncharacterized protein from Synechocystis sp. (strain ATCC 27184 / PCC 6803 / Kazusa).